The primary structure comprises 428 residues: GTPase Obg (428 aa).

The region spanning 1 to 158 (MFVDQVKIYV…RDVILELKVL (158 aa)) is the Obg domain. One can recognise an OBG-type G domain in the interval 159–329 (ADVGLVGFPS…LLFEVANLLE (171 aa)). Residues 165 to 172 (GFPSVGKS), 190 to 194 (FTTIV), 212 to 215 (DLPG), 282 to 285 (NKMD), and 310 to 312 (SAV) each bind GTP. Residues serine 172 and threonine 192 each contribute to the Mg(2+) site. The OCT domain occupies 350-428 (KLETEGVKFD…ILEYEFEFID (79 aa)).

The protein belongs to the TRAFAC class OBG-HflX-like GTPase superfamily. OBG GTPase family. As to quaternary structure, monomer. The cofactor is Mg(2+).

It localises to the cytoplasm. An essential GTPase which binds GTP, GDP and possibly (p)ppGpp with moderate affinity, with high nucleotide exchange rates and a fairly low GTP hydrolysis rate. Plays a role in control of the cell cycle, stress response, ribosome biogenesis and in those bacteria that undergo differentiation, in morphogenesis control. This Bacillus cereus (strain Q1) protein is GTPase Obg.